The following is a 119-amino-acid chain: Acidic phospholipase A2 natratoxin (119 aa).

Cystine bridges form between C11-C71, C26-C118, C28-C44, C43-C99, C50-C92, C60-C85, and C78-C90. Residues Y27, G29, and G31 each contribute to the Ca(2+) site. H47 is a catalytic residue. D48 serves as a coordination point for Ca(2+). Residue D93 is part of the active site.

Belongs to the phospholipase A2 family. Group I subfamily. D49 sub-subfamily. Requires Ca(2+) as cofactor. In terms of tissue distribution, expressed by the venom gland.

Its subcellular location is the secreted. It carries out the reaction a 1,2-diacyl-sn-glycero-3-phosphocholine + H2O = a 1-acyl-sn-glycero-3-phosphocholine + a fatty acid + H(+). In terms of biological role, snake venom phospholipase A2 (PLA2) that has an effectively inhibitory effect on A-type K(+) currents (Kv/KCN) in acutely dissociated rat dorsal root ganglion (DRG) neurons. This inhibitory effect is independent of its enzymatic activity. PLA2 catalyzes the calcium-dependent hydrolysis of the 2-acyl groups in 3-sn-phosphoglycerides. This is Acidic phospholipase A2 natratoxin from Naja atra (Chinese cobra).